We begin with the raw amino-acid sequence, 390 residues long: 4-hydroxycoumarin synthase 1 (390 aa).

Residue C161 is part of the active site.

This sequence belongs to the thiolase-like superfamily. Chalcone/stilbene synthases family. In terms of assembly, homodimer.

It carries out the reaction 2-hydroxybenzoyl-CoA + malonyl-CoA = 4-hydroxycoumarin + CO2 + 2 CoA. Type III polyketide synthase involved preferentially in the biosynthesis of 4-hydroxycoumarin from salicoyl-CoA. Can also use benzoyl-CoA and malonyl-CoA to produce 3,5-dihydroxybiphenyl as a major product and benzoyldiacetic acid lactone as a minor side product. Can also use m-hydroxybenzoyl-CoA as substrate, producing m-hydroxybenzoyl diacetic acid lactone as a derailment product. No activity with p-hydroxybenzoyl-CoA, CoA-linked cinnamic acids or acetyl-CoA. The chain is 4-hydroxycoumarin synthase 1 (BIS2) from Sorbus aucuparia (European mountain ash).